We begin with the raw amino-acid sequence, 591 residues long: Oxaloacetate decarboxylase alpha chain (591 aa).

The 261-residue stretch at 3–263 (IAITDVVLRD…DTGLDILKLE (261 aa)) folds into the Pyruvate carboxyltransferase domain. A Biotinyl-binding domain is found at 518-591 (PAGAGTPVTA…SVGDTLMTLA (74 aa)). Lys-557 carries the post-translational modification N6-biotinyllysine.

Composed of three chains (alpha, beta, and gamma). The cofactor is biotin.

The enzyme catalyses oxaloacetate + 2 Na(+)(in) + H(+) = pyruvate + 2 Na(+)(out) + CO2. Its function is as follows. Catalyzes the decarboxylation of oxaloacetate coupled to Na(+) translocation. The polypeptide is Oxaloacetate decarboxylase alpha chain (oadA1) (Salmonella typhimurium (strain LT2 / SGSC1412 / ATCC 700720)).